Consider the following 659-residue polypeptide: Interferon-induced GTP-binding protein Mx2 (659 aa).

Residues 65 to 338 (DLALPAIAVI…LISHICKSLP (274 aa)) form the Dynamin-type G domain. Residues 75 to 82 (GDQSSGKS) form a G1 motif region. 75 to 82 (GDQSSGKS) is a binding site for GTP. The interval 100 to 102 (VTR) is G2 motif. Residues 176-179 (DLPG) form a G3 motif region. Residues 176–180 (DLPGI) and 245–248 (TKPD) contribute to the GTP site. A G4 motif region spans residues 245 to 248 (TKPD). Residues 277–280 (KCRG) form a G5 motif region. The segment at 547–567 (EAEEEERKHGKSRSSQSKNLQ) is disordered. Residues 571–659 (MDEIFQHLNA…AQRRLAKFPG (89 aa)) enclose the GED domain.

The protein belongs to the TRAFAC class dynamin-like GTPase superfamily. Dynamin/Fzo/YdjA family.

It localises to the cytoplasm. Functionally, interferon-induced dynamin-like GTPase with antiviral activity against vesicular stomatitis virus (VSV). This chain is Interferon-induced GTP-binding protein Mx2 (Mx2), found in Rattus norvegicus (Rat).